We begin with the raw amino-acid sequence, 767 residues long: Serine/threonine-protein kinase DCLK2 (767 aa).

Positions 1-44 are disordered; sequence MASTRSIELEHFEERDKRPRPGSRRGAPSSSGGSSISGPKGNGL. A compositionally biased stretch (basic and acidic residues) spans 7-19; it reads IELEHFEERDKRP. Residues 24 to 43 are compositionally biased toward low complexity; the sequence is RRGAPSSSGGSSISGPKGNG. The residue at position 61 (T61) is a Phosphothreonine. 2 Doublecortin domains span residues 72-158 and 196-279; these read KKAR…VDYT and KLVT…AQDD. Residues 301-311 are compositionally biased toward low complexity; it reads KYSGSRSPGLS. Residues 301–391 are disordered; that stretch reads KYSGSRSPGL…GPELDRCMSP (91 aa). Polar residues predominate over residues 327–338; sequence SAYSTAKSPVNG. A compositionally biased stretch (low complexity) spans 339-362; it reads TPSSQLSTPKSTKSSSSSPTSPGS. Residues 369–380 show a composition bias toward polar residues; that stretch reads ISAQGRSSSNVN. At S377 the chain carries Phosphoserine. The Protein kinase domain occupies 409-666; sequence YRIGKVIGDG…AGEILSHPWV (258 aa). ATP contacts are provided by residues 415-423 and K438; that span reads IGDGNFAVV. D530 serves as the catalytic Proton acceptor. At S662 the chain carries Phosphoserine. T681 bears the Phosphothreonine mark. The span at 721-734 shows a compositional bias: basic and acidic residues; sequence HCRDSSKSSREQTS. A disordered region spans residues 721-767; it reads HCRDSSKSSREQTSAREAPPPPESPRPPGPPATSGCDPAGTWRRHRD. Over residues 738–751 the composition is skewed to pro residues; that stretch reads APPPPESPRPPGPP.

The protein belongs to the protein kinase superfamily. CAMK Ser/Thr protein kinase family. CaMK subfamily. As to quaternary structure, interacts with MAPK8IP1/JIP-1, MAPK8IP2/JIP-2, MAPK9/JNK2, PPP1R9B/NEURABIN-2 and actin. Binds to and stabilizes microtubules; binding affinity is strongly reduced by autophosphorylation. Post-translationally, autophosphorylated.

The protein resides in the cytoplasm. It is found in the cytoskeleton. It carries out the reaction L-seryl-[protein] + ATP = O-phospho-L-seryl-[protein] + ADP + H(+). It catalyses the reaction L-threonyl-[protein] + ATP = O-phospho-L-threonyl-[protein] + ADP + H(+). Functionally, protein kinase with a significantly reduced Ca(2+)+/CAM affinity and dependence compared to other members of the CaMK family. May play a role in the down-regulation of CRE-dependent gene activation probably by phosphorylation of the CREB coactivator CRTC2/TORC2 and the resulting retention of TORC2 in the cytoplasm. In Rattus norvegicus (Rat), this protein is Serine/threonine-protein kinase DCLK2 (Dclk2).